The primary structure comprises 523 residues: Asc-type amino acid transporter 1 (523 aa).

The interval 1–28 (MAGHTQQPSGRGNPRPAPSPSPVPGTVP) is disordered. Over residues 15–25 (RPAPSPSPVPG) the composition is skewed to pro residues. Transmembrane regions (helical) follow at residues 40 to 60 (IGLL…GIFI), 72 to 92 (VGLA…GSLC), 113 to 133 (IFGG…MYPT), 268 to 288 (AIFI…IAYF), 310 to 330 (LLGY…FGGI), 362 to 382 (CTPI…MLVG), 388 to 408 (INYV…GLLL), 424 to 444 (LLIP…SFIS), and 448 to 468 (VCGV…LGVF). Residues 499 to 523 (APEEEENGPCPPSLLPATDKPSKPQ) are disordered.

The protein belongs to the amino acid-polyamine-organocation (APC) superfamily. In terms of assembly, disulfide-linked heterodimer with the amino acid transport protein SLC3A2/4F2hc. As to expression, expressed in brain, heart, kidney, liver, lung, pancreas, placenta, and skeletal muscle.

The protein resides in the cell membrane. It catalyses the reaction L-alanine(in) + glycine(out) = L-alanine(out) + glycine(in). The catalysed reaction is L-serine(out) + L-alanine(in) = L-serine(in) + L-alanine(out). The enzyme catalyses L-threonine(out) + L-alanine(in) = L-threonine(in) + L-alanine(out). It carries out the reaction L-cysteine(out) + L-alanine(in) = L-cysteine(in) + L-alanine(out). It catalyses the reaction 2-aminoisobutanoate(out) + L-alanine(in) = 2-aminoisobutanoate(in) + L-alanine(out). The catalysed reaction is D-serine(out) + L-alanine(in) = D-serine(in) + L-alanine(out). The enzyme catalyses D-alanine(out) + L-alanine(in) = D-alanine(in) + L-alanine(out). It carries out the reaction L-valine(out) + L-alanine(in) = L-valine(in) + L-alanine(out). It catalyses the reaction L-methionine(out) + L-alanine(in) = L-methionine(in) + L-alanine(out). The catalysed reaction is beta-alanine(out) + L-alanine(in) = beta-alanine(in) + L-alanine(out). The enzyme catalyses D-cysteine(out) + L-alanine(in) = D-cysteine(in) + L-alanine(out). It carries out the reaction D-threonine(out) + L-alanine(in) = D-threonine(in) + L-alanine(out). It catalyses the reaction D-isoleucine(out) + D-serine(in) = D-isoleucine(in) + D-serine(out). The catalysed reaction is D-serine(in) = D-serine(out). In terms of biological role, associates with SLC3A2/4F2hc to form a functional heterodimeric complex that translocates small neutral L- and D-amino acids across the plasma membrane. Preferentially mediates exchange transport, but can also operate via facilitated diffusion. Acts as a major transporter for glycine, L- and D-serine in the central nervous system. At the spinal cord and brainstem regulates glycine metabolism and glycinergic inhibitory neurotransmission by providing for glycine de novo synthesis from L-serine and glycine recycling from astrocytes to glycinergic motor neurons. At Schaffer collateral-CA1 synapses mediates D-serine and glycine release that modulates post-synaptic activation of NMDA receptors and excitatory glutamatergic transmission. May regulate D-serine release from mesenchymal progenitors located in developing subcutaneous adipose tissue, favoring white adipocyte over thermogenic beige adipocyte lineage commitment. The sequence is that of Asc-type amino acid transporter 1 (SLC7A10) from Homo sapiens (Human).